The following is a 311-amino-acid chain: Protein lifeguard 3 (311 aa).

Disordered stretches follow at residues 1-37 and 50-72; these read MSNPSAPPPYEDRNPLYPGPPPPGGYGQPSVLPGGYP and PAGYPQPMPPTHPMPMNYGPGHG. Over residues 53-62 the composition is skewed to pro residues; it reads YPQPMPPTHP. 2 positions are modified to phosphoserine: serine 81 and serine 83. 7 helical membrane-spanning segments follow: residues 110 to 130, 134 to 154, 165 to 185, 190 to 210, 221 to 241, 246 to 266, and 286 to 306; these read LLITVAIIAIFTFVEPVSAFV, VAVYYVSYAVFVVTYLILACC, IILLTLFTFAMGFMTGTISSM, AVIIAMIITAVVSISVTIFCF, GLFCVLGIVLLVTGIVTSIVL, VYWLHMLYAALGAICFTLFLA, and ITGALQIYTDIIYIFTFVLQL.

It belongs to the BI1 family. LFG subfamily.

The protein resides in the membrane. The protein localises to the lysosome membrane. It localises to the endosome membrane. In terms of biological role, negatively regulates aortic matrix metalloproteinase-9 (MMP9) production and may play a protective role in vascular remodeling. The sequence is that of Protein lifeguard 3 (TMBIM1) from Homo sapiens (Human).